Here is a 359-residue protein sequence, read N- to C-terminus: 3-dehydroquinate synthase (359 aa).

NAD(+) is bound by residues 69–74 (DGEQHK), 103–107 (GVIGD), 127–128 (TT), K140, K149, and 167–170 (TLDT). Zn(2+) contacts are provided by E182, H245, and H262.

Belongs to the sugar phosphate cyclases superfamily. Dehydroquinate synthase family. Co(2+) is required as a cofactor. Zn(2+) serves as cofactor. Requires NAD(+) as cofactor.

It is found in the cytoplasm. It carries out the reaction 7-phospho-2-dehydro-3-deoxy-D-arabino-heptonate = 3-dehydroquinate + phosphate. The protein operates within metabolic intermediate biosynthesis; chorismate biosynthesis; chorismate from D-erythrose 4-phosphate and phosphoenolpyruvate: step 2/7. Its function is as follows. Catalyzes the conversion of 3-deoxy-D-arabino-heptulosonate 7-phosphate (DAHP) to dehydroquinate (DHQ). The polypeptide is 3-dehydroquinate synthase (Nitrosococcus oceani (strain ATCC 19707 / BCRC 17464 / JCM 30415 / NCIMB 11848 / C-107)).